Consider the following 216-residue polypeptide: Soluble inorganic pyrophosphatase 3 (216 aa).

Acidic residues predominate over residues 1 to 10 (MSEEAYEETQ). Positions 1-21 (MSEEAYEETQESSQSPRPVPK) are disordered. Substrate is bound by residues K66 and R80. Y88 functions as the Proton donor in the catalytic mechanism. Substrate is bound at residue Y92. The Mg(2+) site is built by D102, D107, and D139. Y176 contacts substrate.

This sequence belongs to the PPase family. The cofactor is Mg(2+). Expressed preferentially in stamen, pollen and flower, and at a low level in lateral roots and root elongation zones.

The protein resides in the cytoplasm. The enzyme catalyses diphosphate + H2O = 2 phosphate + H(+). This is Soluble inorganic pyrophosphatase 3 from Arabidopsis thaliana (Mouse-ear cress).